Here is a 580-residue protein sequence, read N- to C-terminus: Mucolipin-1 (580 aa).

A disordered region spans residues 1-38 (MTDPAGPRGSETERLLTPNPGYGTQVGPSPAPPTPPEE). Residues 1 to 65 (MTDPAGPRGS…FRAKGRKPCK (65 aa)) are Cytoplasmic-facing. Position 10 is a phosphoserine (Ser10). The Dileucine motif; mediates targeting to lysosomes signature appears at 11 to 16 (ETERLL). An interaction with phosphoinositides region spans residues 42 to 62 (RRRLKYFFMSPCDKFRAKGRK). A helical transmembrane segment spans residues 66–86 (LMLQVVKILVVTVQLILFGLS). Residues 87-298 (NQLAVTFREE…VFRHGDNSFR (212 aa)) lie on the Extracellular side of the membrane. The segment at 107–121 (LGYSDGADDTFAAYT) is extracellular/lumenal pore loop. Residues Cys166 and Cys192 are joined by a disulfide bond. An N-linked (GlcNAc...) asparagine glycan is attached at Asn230. A disulfide bridge connects residues Cys253 and Cys284. Residues 299–321 (LLFDVVVILTCSLSFLLCARSLL) form a helical membrane-spanning segment. The Cytoplasmic portion of the chain corresponds to 322 to 350 (RGFLLQNEFVRFMWRQRRRVISLWERLEF). The helical transmembrane segment at 351–371 (VNGWYILLVTSDVLTISGTIM) threads the bilayer. Over 372–382 (KIGIEAKNLAS) the chain is Extracellular. A helical transmembrane segment spans residues 383–405 (YDVCSILLGTSTLLVWVGVIRYL). Residues 406 to 427 (TFFHNYNILIATLRVALPSVMR) are Cytoplasmic-facing. A helical transmembrane segment spans residues 428 to 448 (FCCCVAVIYLGYCFCGWIVLG). At 449–456 (PYHVKFRS) the chain is on the extracellular side. The pore-forming intramembrane region spans 457-477 (LSMVSECLFSLINGDDMFVTF). Residues 469 to 474 (NGDDMF) carry the Selectivity filter motif. Residues 478–491 (AAMQAQQGRSSLVW) lie on the Extracellular side of the membrane. A helical membrane pass occupies residues 492-513 (LFSQLYLYSFISLFIYMVLSLF). Over 514–580 (IALITGAYDT…PSEEHSLLVN (67 aa)) the chain is Cytoplasmic. Ser557 and Ser559 each carry phosphoserine; by PAK. The tract at residues 565–567 (CCC) is required for palmitoylation and association with membranes. Positions 573-578 (EEHSLL) match the Dileucine internalization motif; mediates AP2 complex-dependent internalization motif.

This sequence belongs to the transient receptor (TC 1.A.4) family. Polycystin subfamily. MCOLN1 sub-subfamily. Homotetramer. Homooligomer. Can heterooligomerize with MCOLN2 or MCOLN3; heteromeric assemblies have different channel properties as compared to the respective homooligomers and may be tissue-specific. Interacts with PDCD6. Interacts with TMEM163. Interacts with LAPTM4B. In terms of processing, palmitoylated; involved in association with membranes. Phosphorylation by PKA inhibits channel activity. Dephosphorylation increases activity. Post-translationally, proteolytically cleaved probably involving multiple lysosomal proteases including cathepsin B; inhibits lysosomal channel activity.

The protein localises to the late endosome membrane. Its subcellular location is the lysosome membrane. It localises to the cytoplasmic vesicle membrane. It is found in the cell projection. The protein resides in the phagocytic cup. The protein localises to the cytoplasmic vesicle. Its subcellular location is the phagosome membrane. It localises to the cell membrane. It catalyses the reaction Ca(2+)(in) = Ca(2+)(out). It carries out the reaction Fe(2+)(in) = Fe(2+)(out). The enzyme catalyses Mg(2+)(in) = Mg(2+)(out). The catalysed reaction is K(+)(in) = K(+)(out). It catalyses the reaction Na(+)(in) = Na(+)(out). Channel activity is controlled by multiple regulatory mechanisms in different subcellular compartments. Channel function is transiently modulated by changes in Ca(2+) in a pH-dependent manner; pH changes modify the aggregation state of unitary channels; a negative cooperativity between extracellular/lumenal Ca(2+) and H(+) is suggested. Regulated by phosphoinositides in a compartment-specific manner: in lysosomes activated by PtdIns(3,5)P2 (Phosphatidylinositol 3,5-bisphosphate) and at the plasma membrane inhibited by PtdIns(4,5)P2 (Phosphatidylinositol 4,5-bisphosphate). Functionally, nonselective cation channel probably playing a role in the regulation of membrane trafficking events and of metal homeostasis. Acts as a Ca(2+)-permeable cation channel with inwardly rectifying activity. Proposed to play a major role in Ca(2+) release from late endosome and lysosome vesicles to the cytoplasm, which is important for many lysosome-dependent cellular events, including the fusion and trafficking of these organelles, exocytosis and autophagy. Required for efficient uptake of large particles in macrophages in which Ca(2+) release from the lysosomes triggers lysosomal exocytosis. May also play a role in phagosome-lysosome fusion. Involved in lactosylceramide trafficking indicative for a role in the regulation of late endocytic membrane fusion/fission events. By mediating lysosomal Ca(2+) release is involved in regulation of mTORC1 signaling and in mTOR/TFEB-dependent lysosomal adaptation to environmental cues such as nutrient levels. Seems to act as lysosomal active oxygen species (ROS) sensor involved in ROS-induced TFEB activation and autophagy. Also functions as a Fe(2+) permeable channel in late endosomes and lysosomes. Also permeable to Mg(2+), Na(+). K(+) and Cs(+). Proposed to play a role in zinc homeostasis probably implicating its association with TMEM163. In adaptive immunity, TRPML2 and TRPML1 may play redundant roles in the function of the specialized lysosomes of B cells. Its function is as follows. May contribute to cellular lipase activity within the late endosomal pathway or at the cell surface which may be involved in processes of membrane reshaping and vesiculation, especially the growth of tubular structures. However, it is not known, whether it conveys the enzymatic activity directly, or merely facilitates the activity of an associated phospholipase. In Macaca fascicularis (Crab-eating macaque), this protein is Mucolipin-1 (MCOLN1).